The sequence spans 81 residues: Photosystem I iron-sulfur center (81 aa).

4Fe-4S ferredoxin-type domains follow at residues 2–31 (SHSVKIYDTCIGCTQCVRACPLDVLEMVPW) and 37–68 (GQIASSPRTEDCVGCKRCETACPTDFLSIRVY). [4Fe-4S] cluster is bound by residues Cys-11, Cys-14, Cys-17, Cys-21, Cys-48, Cys-51, Cys-54, and Cys-58.

The cyanobacterial PSI reaction center is composed of one copy each of PsaA,B,C,D,E,F,I,J,K,L,M and X, and forms trimeric complexes. The cofactor is [4Fe-4S] cluster.

The protein localises to the cellular thylakoid membrane. It catalyses the reaction reduced [plastocyanin] + hnu + oxidized [2Fe-2S]-[ferredoxin] = oxidized [plastocyanin] + reduced [2Fe-2S]-[ferredoxin]. Apoprotein for the two 4Fe-4S centers FA and FB of photosystem I (PSI); essential for photochemical activity. FB is the terminal electron acceptor of PSI, donating electrons to ferredoxin. The C-terminus interacts with PsaA/B/D and helps assemble the protein into the PSI complex. Required for binding of PsaD and PsaE to PSI. PSI is a plastocyanin/cytochrome c6-ferredoxin oxidoreductase, converting photonic excitation into a charge separation, which transfers an electron from the donor P700 chlorophyll pair to the spectroscopically characterized acceptors A0, A1, FX, FA and FB in turn. The protein is Photosystem I iron-sulfur center of Synechococcus sp. (strain RCC307).